Here is a 156-residue protein sequence, read N- to C-terminus: Small ribosomal subunit protein uS7 (156 aa).

Belongs to the universal ribosomal protein uS7 family. Part of the 30S ribosomal subunit. Contacts proteins S9 and S11.

In terms of biological role, one of the primary rRNA binding proteins, it binds directly to 16S rRNA where it nucleates assembly of the head domain of the 30S subunit. Is located at the subunit interface close to the decoding center, probably blocks exit of the E-site tRNA. In Thermoanaerobacter pseudethanolicus (strain ATCC 33223 / 39E) (Clostridium thermohydrosulfuricum), this protein is Small ribosomal subunit protein uS7.